The primary structure comprises 109 residues: Defensin-B5 (109 aa).

A signal peptide spans 1–20 (MRGLLPFLFLLSFFLSPIQA). Residues 21–44 (QPEGREEELEETWSEDRDQAPPRV) are disordered. A propeptide spanning residues 21–70 (QPEGREEELEETWSEDRDQAPPRVVEESEVVGAENEAGLAAGRSYPWIIL) is cleaved from the precursor. Residues 34 to 44 (SEDRDQAPPRV) show a composition bias toward basic and acidic residues. 3 disulfides stabilise this stretch: Cys73–Cys101, Cys80–Cys95, and Cys85–Cys102. Positions 107 to 109 (AVP) are excised as a propeptide.

Belongs to the beta-defensin family. Highly expressed in kidney, and expressed at lower levels in testis.

Its subcellular location is the secreted. Has antimicrobial activity. The polypeptide is Defensin-B5 (Ornithorhynchus anatinus (Duckbill platypus)).